A 438-amino-acid chain; its full sequence is Putative phospholipase A2 (438 aa).

Ser-257 serves as the catalytic Nucleophile. Catalysis depends on charge relay system residues Asp-291 and His-368.

The protein belongs to the serine esterase family.

Its subcellular location is the cytoplasm. It is found in the nucleus. The catalysed reaction is a 1-O-alkyl-2-acetyl-sn-glycero-3-phosphocholine + H2O = a 1-O-alkyl-sn-glycero-3-phosphocholine + acetate + H(+). This chain is Putative phospholipase A2, found in Schizosaccharomyces pombe (strain 972 / ATCC 24843) (Fission yeast).